We begin with the raw amino-acid sequence, 183 residues long: Dual specificity protein phosphatase 22-B (183 aa).

Residues 4–144 (GINKVLPDLY…LQEFQTGELQ (141 aa)) enclose the Tyrosine-protein phosphatase domain. The active-site Phosphocysteine intermediate is Cys88.

The protein belongs to the protein-tyrosine phosphatase family. Non-receptor class dual specificity subfamily.

The protein resides in the cytoplasm. It is found in the nucleus. The enzyme catalyses O-phospho-L-tyrosyl-[protein] + H2O = L-tyrosyl-[protein] + phosphate. It carries out the reaction O-phospho-L-seryl-[protein] + H2O = L-seryl-[protein] + phosphate. It catalyses the reaction O-phospho-L-threonyl-[protein] + H2O = L-threonyl-[protein] + phosphate. Its function is as follows. Activates the Jnk signaling pathway. Dephosphorylates and deactivates p38 and stress-activated protein kinase/c-Jun N-terminal kinase (SAPK/JNK). The protein is Dual specificity protein phosphatase 22-B (dusp22b) of Danio rerio (Zebrafish).